We begin with the raw amino-acid sequence, 874 residues long: Protein translocase subunit SecA (874 aa).

ATP is bound by residues Gln-87, 105-109 (GEGKT), and Asp-512. Positions 859, 861, 870, and 871 each coordinate Zn(2+).

Belongs to the SecA family. Monomer and homodimer. Part of the essential Sec protein translocation apparatus which comprises SecA, SecYEG and auxiliary proteins SecDF-YajC and YidC. Requires Zn(2+) as cofactor.

Its subcellular location is the cell inner membrane. It is found in the cytoplasm. The enzyme catalyses ATP + H2O + cellular proteinSide 1 = ADP + phosphate + cellular proteinSide 2.. Functionally, part of the Sec protein translocase complex. Interacts with the SecYEG preprotein conducting channel. Has a central role in coupling the hydrolysis of ATP to the transfer of proteins into and across the cell membrane, serving both as a receptor for the preprotein-SecB complex and as an ATP-driven molecular motor driving the stepwise translocation of polypeptide chains across the membrane. This chain is Protein translocase subunit SecA, found in Buchnera aphidicola subsp. Schizaphis graminum (strain Sg).